The following is a 375-amino-acid chain: MVAPEGLREMEGSALRRLVGREEASGGRCLLLDCRPFLAHSAGHIRGALNVRCNTIVRRRAKGAVSLEQILPAEGEVRARLRAGLYTAVVLYDERSPRAEALRDDSTVALVLRALRRDMARADIRLLAGGYERFASEYPEFCAKTKTLSSISPPSSAESLDLGFSSCGTPLHDQGGPVEILPFLYLGSAYHAARRDMLDALGITALLNVSSDCPNHFEGHYQYKCIPVEDNHKADISSWFMEAIEYIDSVKECCGRVLVHCQAGISRSATICLAYLMMKKRVKLEKAFEFVKQRRSIISPNFSFMGQLLQFESQVLATSCAVEAASPSGTLRERGKATSTPTSQFVFSFPVSVGVHATPSSLPYLHSPITTSPSC.

The Rhodanese domain maps to 25–143 (SGGRCLLLDC…FASEYPEFCA (119 aa)). The region spanning 176–317 (GPVEILPFLY…LLQFESQVLA (142 aa)) is the Tyrosine-protein phosphatase domain. Cysteine 261 serves as the catalytic Phosphocysteine intermediate.

Belongs to the protein-tyrosine phosphatase family. Non-receptor class dual specificity subfamily.

It localises to the nucleus. The enzyme catalyses O-phospho-L-tyrosyl-[protein] + H2O = L-tyrosyl-[protein] + phosphate. The catalysed reaction is O-phospho-L-seryl-[protein] + H2O = L-seryl-[protein] + phosphate. It carries out the reaction O-phospho-L-threonyl-[protein] + H2O = L-threonyl-[protein] + phosphate. Functionally, regulates mitogenic signal transduction by dephosphorylating both Thr and Tyr residues on MAP kinases ERK1 and ERK2. The sequence is that of Dual specificity protein phosphatase 4 (DUSP4) from Gallus gallus (Chicken).